Reading from the N-terminus, the 340-residue chain is uncharacterized protein (340 aa).

Residues Lys193–Thr207 are compositionally biased toward basic and acidic residues. The interval Lys193–Ile340 is disordered. Positions Phe217 to Ser228 are enriched in low complexity. Residues Glu235–Ile244 are compositionally biased toward basic and acidic residues. 2 stretches are compositionally biased toward polar residues: residues Ser263–Gln279 and Pro307–Leu328.

This is an uncharacterized protein from Saccharomyces cerevisiae (strain ATCC 204508 / S288c) (Baker's yeast).